Reading from the N-terminus, the 174-residue chain is 2-C-methyl-D-erythritol 2,4-cyclodiphosphate synthase (174 aa).

A divalent metal cation-binding residues include Asp13, His15, and His61. 4-CDP-2-C-methyl-D-erythritol 2-phosphate is bound at residue 13–15 (DAH). 4-CDP-2-C-methyl-D-erythritol 2-phosphate is bound by residues 75-77 (DIG), 149-152 (TTTD), Phe156, and His159.

The protein belongs to the IspF family. In terms of assembly, homotrimer. A divalent metal cation serves as cofactor.

The catalysed reaction is 4-CDP-2-C-methyl-D-erythritol 2-phosphate = 2-C-methyl-D-erythritol 2,4-cyclic diphosphate + CMP. The protein operates within isoprenoid biosynthesis; isopentenyl diphosphate biosynthesis via DXP pathway; isopentenyl diphosphate from 1-deoxy-D-xylulose 5-phosphate: step 4/6. Its function is as follows. Involved in the biosynthesis of isopentenyl diphosphate (IPP) and dimethylallyl diphosphate (DMAPP), two major building blocks of isoprenoid compounds. Catalyzes the conversion of 4-diphosphocytidyl-2-C-methyl-D-erythritol 2-phosphate (CDP-ME2P) to 2-C-methyl-D-erythritol 2,4-cyclodiphosphate (ME-CPP) with a corresponding release of cytidine 5-monophosphate (CMP). The polypeptide is 2-C-methyl-D-erythritol 2,4-cyclodiphosphate synthase (Bifidobacterium longum (strain NCC 2705)).